Consider the following 364-residue polypeptide: Serine/threonine-protein kinase ENV7 (364 aa).

Residues C13, C14, and C15 are each lipidated (S-palmitoyl cysteine). One can recognise a Protein kinase domain in the interval 30–364 (YRIQRLLGEG…LLNLLQDLDT (335 aa)). ATP contacts are provided by residues 36–44 (LGEGGMSFV) and K69. D215 acts as the Proton acceptor in catalysis.

The protein belongs to the protein kinase superfamily. Ser/Thr protein kinase family.

The protein resides in the vacuole membrane. The catalysed reaction is L-seryl-[protein] + ATP = O-phospho-L-seryl-[protein] + ADP + H(+). It carries out the reaction L-threonyl-[protein] + ATP = O-phospho-L-threonyl-[protein] + ADP + H(+). In terms of biological role, serine/threonine-protein kinase involved in vacuolar processing and morphology. This chain is Serine/threonine-protein kinase ENV7 (ENV7), found in Saccharomyces cerevisiae (strain ATCC 204508 / S288c) (Baker's yeast).